A 318-amino-acid chain; its full sequence is Malate dehydrogenase (318 aa).

NAD(+) is bound by residues 10–15 (GGGQIG) and aspartate 34. 2 residues coordinate substrate: arginine 83 and arginine 89. NAD(+) is bound by residues asparagine 96 and 119 to 121 (ISN). The substrate site is built by asparagine 121 and arginine 152. Histidine 176 serves as the catalytic Proton acceptor.

The protein belongs to the LDH/MDH superfamily. MDH type 3 family.

It carries out the reaction (S)-malate + NAD(+) = oxaloacetate + NADH + H(+). Functionally, catalyzes the reversible oxidation of malate to oxaloacetate. The sequence is that of Malate dehydrogenase from Geotalea uraniireducens (strain Rf4) (Geobacter uraniireducens).